The sequence spans 288 residues: N-acetylneuraminate lyase (288 aa).

Aceneuramate contacts are provided by Ser-44 and Thr-45. Tyr-133 serves as the catalytic Proton donor. The active-site Schiff-base intermediate with substrate is Lys-161. Residues Thr-163, Gly-185, Asp-187, Glu-188, and Ser-204 each coordinate aceneuramate.

Belongs to the DapA family. NanA subfamily. As to quaternary structure, homotetramer.

Its subcellular location is the cytoplasm. The catalysed reaction is aceneuramate = aldehydo-N-acetyl-D-mannosamine + pyruvate. The protein operates within amino-sugar metabolism; N-acetylneuraminate degradation; D-fructose 6-phosphate from N-acetylneuraminate: step 1/5. Catalyzes the reversible aldol cleavage of N-acetylneuraminic acid (sialic acid; Neu5Ac) to form pyruvate and N-acetylmannosamine (ManNAc) via a Schiff base intermediate. The sequence is that of N-acetylneuraminate lyase from Clostridium perfringens (strain SM101 / Type A).